Reading from the N-terminus, the 292-residue chain is Ribosomal protein L11 methyltransferase (292 aa).

Thr-143, Gly-164, Asp-186, and Asn-228 together coordinate S-adenosyl-L-methionine.

The protein belongs to the methyltransferase superfamily. PrmA family.

The protein localises to the cytoplasm. The catalysed reaction is L-lysyl-[protein] + 3 S-adenosyl-L-methionine = N(6),N(6),N(6)-trimethyl-L-lysyl-[protein] + 3 S-adenosyl-L-homocysteine + 3 H(+). Methylates ribosomal protein L11. The sequence is that of Ribosomal protein L11 methyltransferase from Aeromonas hydrophila subsp. hydrophila (strain ATCC 7966 / DSM 30187 / BCRC 13018 / CCUG 14551 / JCM 1027 / KCTC 2358 / NCIMB 9240 / NCTC 8049).